We begin with the raw amino-acid sequence, 408 residues long: UPF0496 protein At5g66670 (408 aa).

A run of 2 helical transmembrane segments spans residues 239 to 259 and 262 to 282; these read VVFA…AAMM and PVLS…GMWC.

Belongs to the UPF0496 family.

The protein localises to the membrane. The sequence is that of UPF0496 protein At5g66670 from Arabidopsis thaliana (Mouse-ear cress).